A 1193-amino-acid chain; its full sequence is MEDDLNTLAPLGPAAWLFVCPRQDEWCDVLAALSLCDRSSSVAIAPLLVDLTVDRDFQVAVRTPISRYEGGVLTKVTSMWPAAFVFHNAEAIVSRTEDHGDVGGLCAEARARFGVASYRAEAERADTDFTELWAALGVDGARVVMYAVVGYGLKELLYAGQLVPCVEEARTVLLGAVEAFKLPLYPATLFADGDATADGAAAVGLRSRTPFVDRRGLYVSALSEALFYYVFTALGQALRFGHTEHLIDEGMKQFLQDTQNSVKLAPQKRYYGYLSQKLTPGERDQLLLCDAIACELAFSFASVYFDSAYEPAPLMNYSEWPLVRAAEGHADLLRRLSELKLHLSAHVGALVFSGNSVLYQTRIAFFSAANKVPAGGTAQDGLLKAVQFCNGLTCLTEDALNDACRTVKFEGPGGGGGGRDEQFTPQHLAWACATSPHLMSDLVWYLNRLAIYNTGQNGGSALYEHLVHCAVNLCPACRGRCCQSCYQTAFVRIQTRLPPLPKQLKREPFVLTLFSRFLCDVDVLGTFGKRYAGDAKEPSAASLAAAPGEARKVGDEAGLGAGGGGPGGRLGVNVDRLKYFNQILDYCKRNSLIDPSTGEDTLAVRGRADFMSALSGLNRCVDEAAMALVSEVRMKSNRDEVAGATQAFNLDLNPYAVAFSPLLAHQYYRAFFLIVQNLALVSASSYVVDNPLTVSSLSRWLLQHFQSICGAFASNSARKGLLFTKDAKCSKSVEFERFMDFALYAASGRHVLLSTETKLCKLSVCMLRTCRVKNRPIPRGGKGLPVSVFFKRDVVQRRNPVRGCLAFLLYAFHERLFPGCGLSCLDFWQKVYHNALPKSVAIGKMEEFNAFVKYVLNVTTEYNEHDLIDVPPSNLLSYVEYRFHNKFLCFYGFGDYLSTLHGLSTKLVPQNHLNFPHLLAASPKFASVAEYVLYFKKLKLDGVPPPHVATFSRESLVRSVFENRSLVTVAFGIEKYSTSGGSREVFHFGQIGYFAGNGVERSLNVNSMGGGDYRYMRQRFVLATRLVDLLLRRSRRETVLFDADLLRTRVLAALESHDTQLDPELAAIAEIMDGRGGEPPEYEDVLFFVDGQECLAASIVGKIKELIKKGVEDFSLTALGADAGAGGGPAGSAGGPESGGGAGAAGGEGTYDLSALFLDVENECVVLEGPTAAALDGGGDGDECAFPAKRLRL.

The Required for filament formation signature appears at 827–828 (FW). The interval 1125 to 1145 (AGGGPAGSAGGPESGGGAGAA) is disordered. The segment at 1170–1193 (PTAAALDGGGDGDECAFPAKRLRL) is required for nuclear localization.

Belongs to the herpesviridae major DNA-binding protein family. Homooligomers. Forms double-helical filaments necessary for the formation of replication compartments within the host nucleus. Interacts with the origin-binding protein. Interacts with the helicase primase complex; this interaction stimulates primer synthesis activity of the helicase-primase complex. Interacts with the DNA polymerase. Interacts with the alkaline exonuclease; this interaction increases its nuclease processivity.

It is found in the host nucleus. Functionally, plays several crucial roles in viral infection. Participates in the opening of the viral DNA origin to initiate replication by interacting with the origin-binding protein. May disrupt loops, hairpins and other secondary structures present on ssDNA to reduce and eliminate pausing of viral DNA polymerase at specific sites during elongation. Promotes viral DNA recombination by performing strand-transfer, characterized by the ability to transfer a DNA strand from a linear duplex to a complementary single-stranded DNA circle. Can also catalyze the renaturation of complementary single strands. Additionally, reorganizes the host cell nucleus, leading to the formation of prereplicative sites and replication compartments. This process is driven by the protein which can form double-helical filaments in the absence of DNA. The chain is Major DNA-binding protein from Tupaiid herpesvirus (strain 2) (TuHV-2).